We begin with the raw amino-acid sequence, 456 residues long: Trigger factor (456 aa).

Residues G166–P245 form the PPIase FKBP-type domain.

Belongs to the FKBP-type PPIase family. Tig subfamily.

It localises to the cytoplasm. The enzyme catalyses [protein]-peptidylproline (omega=180) = [protein]-peptidylproline (omega=0). Functionally, involved in protein export. Acts as a chaperone by maintaining the newly synthesized protein in an open conformation. Functions as a peptidyl-prolyl cis-trans isomerase. The protein is Trigger factor of Bifidobacterium adolescentis (strain ATCC 15703 / DSM 20083 / NCTC 11814 / E194a).